Reading from the N-terminus, the 478-residue chain is Major facilitator superfamily domain-containing protein 12 (478 aa).

An N-acetylmethionine modification is found at Met-1. Residues 1–26 (MVPGSPAAGAGPAPRALSLAARLSYA) lie on the Cytoplasmic side of the membrane. Residues 27–47 (VGHFLNDLCASMWFTYLLLYL) form a helical membrane-spanning segment. Residues 48–56 (HSVRAYSSR) are Lumenal-facing. Residues 57–77 (GAGLLLLLGQVADGLCTPLVG) form a helical membrane-spanning segment. Over 78-97 (YEADRAAGRCARCGPRKAWH) the chain is Cytoplasmic. A helical transmembrane segment spans residues 98–118 (LVGTVCVLLSFPFIFSPCLGC). Residues 119-124 (GAATPE) lie on the Lumenal side of the membrane. The helical transmembrane segment at 125 to 145 (WAALLYYGPFIVVFQFGWAAT) threads the bilayer. At 146-168 (QIAHLSLIPELVTSDHEKVELTA) the chain is on the cytoplasmic side. The chain crosses the membrane as a helical span at residues 169-189 (LRYAFTVVANITVFGAAWLLL). Residues 190 to 216 (RLQGSAREGPPDEAGDHLGVQDVPVFR) lie on the Lumenal side of the membrane. A helical membrane pass occupies residues 217 to 237 (TLSLCVVGVGAVFSLLFHLGT). Residues 238–277 (RERRRPPAQEPDERSPLLAPATARPLLLWKHWLREPSFYQ) are Cytoplasmic-facing. Residues 278 to 300 (VGLLYMSTRLIVNLSQTYIAMYL) form a helical membrane-spanning segment. At 301-308 (TYSLNLPK) the chain is on the lumenal side. Residues 309–329 (KFIATIPLVMYVSGFCSSFLM) traverse the membrane as a helical segment. Residues 330–338 (KPVNKCIGR) lie on the Cytoplasmic side of the membrane. The helical transmembrane segment at 339 to 359 (NMTYFVGLLVILAFAAWVVLV) threads the bilayer. Over 360-361 (DE) the chain is Lumenal. A helical membrane pass occupies residues 362-382 (LGMAVYVAAVLLGGGCATILV). Over 383–400 (TSLAMTADLIGPHTHSGA) the chain is Cytoplasmic. The helical transmembrane segment at 401 to 421 (FVYGAMSFSDKVANGLAVMVI) threads the bilayer. The Lumenal portion of the chain corresponds to 422–436 (QSLHPCSLELCCRAC). The chain crosses the membrane as a helical span at residues 437–457 (VGFYHWVMVAVTGGVGVAATL). Residues 458–478 (SLCSLLVWPIRLRSWDPGAQP) are Cytoplasmic-facing.

Belongs to the major facilitator superfamily.

It localises to the melanosome membrane. The protein localises to the lysosome membrane. It catalyses the reaction L-cysteine(in) = L-cysteine(out). In terms of biological role, transporter that mediates the import of cysteine into melanosomes, thereby regulating skin/hair pigmentation. In melanosomes, cysteine import is required both for normal levels of cystine, the oxidized dimer of cysteine, and provide cysteine for the production of the cysteinyldopas used in pheomelanin synthesis, thereby regulating skin/hair pigmentation. Also catalyzes import of cysteine into lysosomes in non-pigmented cells, regulating lysosomal cystine and cysteine storage, which is essnetial for redox homeostasis. The sequence is that of Major facilitator superfamily domain-containing protein 12 from Equus caballus (Horse).